The following is a 311-amino-acid chain: Pyrimidine-specific ribonucleoside hydrolase RihA (311 aa).

His-240 is an active-site residue.

This sequence belongs to the IUNH family. RihA subfamily.

Functionally, hydrolyzes cytidine or uridine to ribose and cytosine or uracil, respectively. In Salmonella enteritidis PT4 (strain P125109), this protein is Pyrimidine-specific ribonucleoside hydrolase RihA.